The chain runs to 392 residues: Phosphoglycerate kinase (392 aa).

Residues 21 to 23, R36, 59 to 62, R118, and R151 contribute to the substrate site; these read DFN and HLGR. Residues K202, E321, and 347–350 each bind ATP; that span reads GGDS.

This sequence belongs to the phosphoglycerate kinase family. Monomer.

The protein resides in the cytoplasm. It catalyses the reaction (2R)-3-phosphoglycerate + ATP = (2R)-3-phospho-glyceroyl phosphate + ADP. Its pathway is carbohydrate degradation; glycolysis; pyruvate from D-glyceraldehyde 3-phosphate: step 2/5. This chain is Phosphoglycerate kinase, found in Symbiobacterium thermophilum (strain DSM 24528 / JCM 14929 / IAM 14863 / T).